Reading from the N-terminus, the 4471-residue chain is Dynein axonemal heavy chain 10 (4471 aa).

The interval 1–1793 (MVPEEVEVEI…NIRQCTGTFG (1793 aa)) is stem. The tract at residues 46 to 65 (TESLGQPLNREDEEMDKEIS) is disordered. 4 coiled-coil regions span residues 203–223 (NVQK…GEIK), 602–622 (QEVK…EDRK), 1071–1106 (KLLN…EDLK), and 1217–1245 (VELL…KLFD). N1074 carries an N-linked (GlcNAc...) asparagine glycan. A TPR 1 repeat occupies 1221–1254 (GVYERELARHEKSRQELANAEKLFDLPITMYPEL). AAA regions lie at residues 1794–2015 (YGYE…VLVM), 2075–2294 (DAVE…VIVE), 2417–2665 (IHAP…VFNG), and 2765–3014 (EYNE…LRRS). The GPAGTGKT motif motif lies at 1832 to 1839 (GPAGTGKT). Residue 1832-1839 (GPAGTGKT) participates in ATP binding. Residues 1882–1888 (CFDEFNR) carry the CFDEFNR motif motif. Residues 2113–2120 (GPTRGGKS) and 2455–2462 (GESGTSKT) contribute to the ATP site. 2 TPR repeats span residues 2736-2769 (MALH…YNES) and 2771-2797 (TKMN…MDRG). Residues 2747 to 2770 (EDIQDYEAAKALFQEILEEYNESN) adopt a coiled-coil conformation. Residue 2803-2810 (GVGGSGKQ) participates in ATP binding. Residues 3029–3313 (YSKLLDEKTQ…QKLQEEAEIM (285 aa)) form a stalk region. Coiled-coil stretches lie at residues 3045-3131 (KRLD…LAEV), 3257-3327 (KREK…ISGL), and 3567-3638 (ERRE…EKTA). Positions 3399-3629 (LTDDVEISRW…TKSKATEVSE (231 aa)) are AAA 5. The stretch at 3802–3837 (WQEWYDLDSLEQFPVPLGYDNNITPFQKLLILRCFR) is one TPR 4 repeat. The AAA 6 stretch occupies residues 3845–4062 (VTDYVTVTMG…FQVCMEILNT (218 aa)). A TPR 5 repeat occupies 4074–4108 (RIPWGSLKYLIGEVMYGGRAIDSFDRRILTIYMDE). Residues 4235 to 4260 (LLQELERFNKLVVRMTKSLAELQRAL) adopt a coiled-coil conformation.

It belongs to the dynein heavy chain family. In terms of assembly, consists of at least two heavy chains and a number of intermediate and light chains. As to expression, expressed primarily in trachea and testis, 2 tissues containing axonemal structures. Also expressed in brain but not in adult heart.

Its subcellular location is the cytoplasm. It localises to the cytoskeleton. The protein resides in the cilium axoneme. Its function is as follows. Force generating protein of respiratory cilia. Produces force towards the minus ends of microtubules. Dynein has ATPase activity; the force-producing power stroke is thought to occur on release of ADP. Involved in sperm motility; implicated in sperm flagellar assembly. Probable inner arm dynein heavy chain. The polypeptide is Dynein axonemal heavy chain 10 (DNAH10) (Homo sapiens (Human)).